The sequence spans 762 residues: Mitochondrial intermediate peptidase (762 aa).

Residues 1-28 (MQVRTLLTLGKKKVIGNRQCILSLYRKY) constitute a mitochondrion transit peptide. A Zn(2+)-binding site is contributed by His-544. Glu-545 is a catalytic residue. Zn(2+) is bound by residues His-548 and His-551.

It belongs to the peptidase M3 family. The cofactor is Zn(2+).

The protein localises to the mitochondrion matrix. It carries out the reaction Release of an N-terminal octapeptide as second stage of processing of some proteins imported into the mitochondrion.. Cleaves proteins, imported into the mitochondrion, to their mature size. While most mitochondrial precursor proteins are processed to the mature form in one step by mitochondrial processing peptidase (MPP), the sequential cleavage by MIP of an octapeptide after initial processing by MPP is a required step for a subgroup of nuclear-encoded precursor proteins destined for the matrix or the inner membrane. The sequence is that of Mitochondrial intermediate peptidase (oct1) from Schizosaccharomyces pombe (strain 972 / ATCC 24843) (Fission yeast).